A 424-amino-acid polypeptide reads, in one-letter code: MKLEMICTGEEVLSGQIVDTNAAWFASTMMEHGIEIQRRVTVGDRLEDLIAVFQERSLHADVILVNGGLGPTSDDMSAEAMAKAKGESLVENIEWRQQLEDWFTRNNREMPVSNLKQAMLPESAVMVDNPVGTACGFRVKLNRAWLFFTPGVPFELKHMVKEQFIPFIRDEFNLDAKVALKKLLTIGQGESALADKIEPLELPEGITIGYRSSMPHIEIKIFARGEKAIVLLPRVTGHVKMVLGTAVVAEDKATLAEEIHSRLLNSGLTLSVAESCTGGMITSQLVDFAGSSSYLHHGLVTYSNESKVRVLGVNPATLDDHGAVSIPTVEEMAKGARAILDSDFALATSGIAGPDGGTEDKPVGTVAIALATRNGVYSQMIKLPRRSRDLVRSLSAAVAYDMLRRELLAEAVIVDYQSIGRFSK.

This sequence belongs to the CinA family.

This chain is CinA-like protein, found in Shewanella putrefaciens (strain CN-32 / ATCC BAA-453).